Consider the following 370-residue polypeptide: D-alanine--D-alanine ligase (370 aa).

An ATP-grasp domain is found at Lys144–Asp352. Glu177 to Glu232 contributes to the ATP binding site. 3 residues coordinate Mg(2+): Asp306, Glu319, and Asn321.

Belongs to the D-alanine--D-alanine ligase family. Requires Mg(2+) as cofactor. The cofactor is Mn(2+).

It is found in the cytoplasm. It catalyses the reaction 2 D-alanine + ATP = D-alanyl-D-alanine + ADP + phosphate + H(+). The protein operates within cell wall biogenesis; peptidoglycan biosynthesis. Cell wall formation. The sequence is that of D-alanine--D-alanine ligase from Listeria welshimeri serovar 6b (strain ATCC 35897 / DSM 20650 / CCUG 15529 / CIP 8149 / NCTC 11857 / SLCC 5334 / V8).